The following is a 151-amino-acid chain: MALNSLSLSLQFGKFPDAALHRAALPRHSVARWIRHALQSDAEITVRIVGAEEGQALNRDYRAKDYATNVLTFDYTQAPYVTADLVLCAPVVAKEAQDNQKTLQAHYAHLLVHGTLHAQGYDHETGEEDAEEMEALEIEILAGLGFDNPYR.

Zn(2+) contacts are provided by H113, H117, and H123.

The protein belongs to the endoribonuclease YbeY family. It depends on Zn(2+) as a cofactor.

The protein resides in the cytoplasm. Its function is as follows. Single strand-specific metallo-endoribonuclease involved in late-stage 70S ribosome quality control and in maturation of the 3' terminus of the 16S rRNA. The polypeptide is Endoribonuclease YbeY (Polaromonas naphthalenivorans (strain CJ2)).